We begin with the raw amino-acid sequence, 261 residues long: UPF0328 protein ECU03_1620 (261 aa).

The protein belongs to the UPF0328 family.

This is UPF0328 protein ECU03_1620 from Encephalitozoon cuniculi (strain GB-M1) (Microsporidian parasite).